Consider the following 157-residue polypeptide: NAD(P)H-quinone oxidoreductase subunit N (157 aa).

This sequence belongs to the complex I NdhN subunit family. NDH-1 can be composed of about 15 different subunits; different subcomplexes with different compositions have been identified which probably have different functions.

It is found in the cellular thylakoid membrane. It carries out the reaction a plastoquinone + NADH + (n+1) H(+)(in) = a plastoquinol + NAD(+) + n H(+)(out). The catalysed reaction is a plastoquinone + NADPH + (n+1) H(+)(in) = a plastoquinol + NADP(+) + n H(+)(out). In terms of biological role, NDH-1 shuttles electrons from an unknown electron donor, via FMN and iron-sulfur (Fe-S) centers, to quinones in the respiratory and/or the photosynthetic chain. The immediate electron acceptor for the enzyme in this species is believed to be plastoquinone. Couples the redox reaction to proton translocation, and thus conserves the redox energy in a proton gradient. Cyanobacterial NDH-1 also plays a role in inorganic carbon-concentration. The protein is NAD(P)H-quinone oxidoreductase subunit N of Synechococcus sp. (strain CC9902).